Consider the following 143-residue polypeptide: Large ribosomal subunit protein uL11 (143 aa).

Belongs to the universal ribosomal protein uL11 family. In terms of assembly, part of the ribosomal stalk of the 50S ribosomal subunit. Interacts with L10 and the large rRNA to form the base of the stalk. L10 forms an elongated spine to which L12 dimers bind in a sequential fashion forming a multimeric L10(L12)X complex. Post-translationally, one or more lysine residues are methylated.

Forms part of the ribosomal stalk which helps the ribosome interact with GTP-bound translation factors. The chain is Large ribosomal subunit protein uL11 from Salinispora tropica (strain ATCC BAA-916 / DSM 44818 / JCM 13857 / NBRC 105044 / CNB-440).